We begin with the raw amino-acid sequence, 512 residues long: Tabersonine 16-hydroxylase 2 (512 aa).

Position 1 (methionine 1) is a topological domain, lumenal. Residues 2-22 (ELYYFSTFAFLLFCFILAKTL) form a helical membrane-spanning segment. Over 23-512 (KKSGQSNLKL…YSASSLKGKY (490 aa)) the chain is Cytoplasmic. Residue cysteine 445 coordinates heme.

It belongs to the cytochrome P450 family. Heme is required as a cofactor. In terms of tissue distribution, expressed at low levels in roots, fruits, stems, flower buds and flowers, but highly expressed in young leaves. Detected in adaxial and abaxial epidermis cells.

It is found in the endoplasmic reticulum membrane. The catalysed reaction is (-)-tabersonine + reduced [NADPH--hemoprotein reductase] + O2 = 16-hydroxytabersonine + oxidized [NADPH--hemoprotein reductase] + H2O + H(+). Functionally, involved in the foliar biosynthesis of vindoline, a precursor of vinblastine and vincristine. Hydroxylates specifically tabersonine, 2,3-dihydrotabersonine and 2,3-dihydro-3-hydroxytabersonine, but has no activity with naringenin, tryptamine, secologanin, strictosidine, ajmalicine, vindoline and catharanthine. The sequence is that of Tabersonine 16-hydroxylase 2 from Catharanthus roseus (Madagascar periwinkle).